Here is a 199-residue protein sequence, read N- to C-terminus: ATP-dependent Clp protease proteolytic subunit (199 aa).

Catalysis depends on Ser98, which acts as the Nucleophile. His123 is an active-site residue.

This sequence belongs to the peptidase S14 family. Fourteen ClpP subunits assemble into 2 heptameric rings which stack back to back to give a disk-like structure with a central cavity, resembling the structure of eukaryotic proteasomes.

The protein localises to the cytoplasm. The catalysed reaction is Hydrolysis of proteins to small peptides in the presence of ATP and magnesium. alpha-casein is the usual test substrate. In the absence of ATP, only oligopeptides shorter than five residues are hydrolyzed (such as succinyl-Leu-Tyr-|-NHMec, and Leu-Tyr-Leu-|-Tyr-Trp, in which cleavage of the -Tyr-|-Leu- and -Tyr-|-Trp bonds also occurs).. Functionally, cleaves peptides in various proteins in a process that requires ATP hydrolysis. Has a chymotrypsin-like activity. Plays a major role in the degradation of misfolded proteins. The polypeptide is ATP-dependent Clp protease proteolytic subunit (Clostridium botulinum (strain Alaska E43 / Type E3)).